The sequence spans 402 residues: Acetyl-CoA acetyltransferase (402 aa).

The active-site Acyl-thioester intermediate is cysteine 90. CoA contacts are provided by tyrosine 185 and lysine 230. Residue tyrosine 185 coordinates K(+). Residue alanine 250 participates in K(+) binding. A CoA-binding site is contributed by serine 251. K(+) is bound at residue valine 348. Active-site proton acceptor residues include histidine 352 and cysteine 382.

It belongs to the thiolase-like superfamily. Thiolase family. As to quaternary structure, homotetramer.

The protein resides in the cytoplasm. The protein localises to the cytosol. The enzyme catalyses 2 acetyl-CoA = acetoacetyl-CoA + CoA. Its pathway is metabolic intermediate biosynthesis; (R)-mevalonate biosynthesis; (R)-mevalonate from acetyl-CoA: step 1/3. Its function is as follows. Acetyl-CoA acetyltransferase; part of the first module of ergosterol biosynthesis pathway that includes the early steps of the pathway, conserved across all eukaryotes, and which results in the formation of mevalonate from acetyl-coenzyme A (acetyl-CoA). ERG10 catalyzes the formation of acetoacetyl-CoA from acetyl-CoA. The first module starts with the action of the cytosolic acetyl-CoA acetyltransferase ERG10 that catalyzes the formation of acetoacetyl-CoA. The hydroxymethylglutaryl-CoA synthase ERG13 then condenses acetyl-CoA with acetoacetyl-CoA to form HMG-CoA. The 3-hydroxy-3-methylglutaryl-coenzyme A (HMG-CoA) reductase HMG1 finally reduces HMG-CoA to produce mevalonate. This Candida albicans (strain SC5314 / ATCC MYA-2876) (Yeast) protein is Acetyl-CoA acetyltransferase.